A 729-amino-acid polypeptide reads, in one-letter code: MLYKGDTLYLDWLEDGIAELVFDAPGSVNKLDTATVASLGHALDVLEKQSDLKGLLLRSEKAAFIVGADITEFLSLFLVPEEQLSQWLHFANSVFNRLEDLPVPTISAVNGYALGGGCECVLATDYRLATPDLRIGLPETKLGIMPGFGGSVRLPRLLGADSALEIIAAGKDVGADQALKIGLVDGVVAAEKLRDGALAILRQAMNGDLDWKAKRQPKLEPLKLSKIEAAMSFTIAKGMVAQTAGKHYPAPITAVKTIEAAARLGREEALVLENKSFVPLAHTNEARALVGIFLNDQYVKAKAKKLTKDVETPKHAAVLGAGIMGGGIAYQSAWKGVPVVMKDISDKSLTLGMTEAAKLLNKQLERGKIDGLKLAGVISTIQPTLEYSGFDRVDVVVEAVVENPKVKKAVLAETESKVRPDTVLASNTSTIPISELASVLQRPENFCGMHFFNPVHRMPLVEVIRGEKTSDNTIAKVVAWASKMGKTPIVVNDCPGFFVNRVLFPYFAGFSQLLRDGADFRKVDKVMEKQFGWPMGPAYLLDVVGIDTAHHAQAVMAAGFPQRMQKDYRDAIDALFDANRFGQKNGLGFWRYKDDSKGKPKKEEDAAVDSLLADVSQPKRDFSDEEIIARMMIPMVNEVVRCLEEGIIASPAEADMALVYGLGFPPFHGGAFRWLDTIGSAKYLDMAQQYQHLGPLYEVPAGLRDKARHNEAYYPQVEPARPVGALKTA.

The segment at 1–189 (MLYKGDTLYL…KIGLVDGVVA (189 aa)) is enoyl-CoA hydratase/isomerase. Asp296 lines the substrate pocket. The interval 311 to 729 (ETPKHAAVLG…ARPVGALKTA (419 aa)) is 3-hydroxyacyl-CoA dehydrogenase. Residues Met324, Asp343, 400-402 (VVE), Lys407, and Ser429 contribute to the NAD(+) site. The For 3-hydroxyacyl-CoA dehydrogenase activity role is filled by His450. Asn453 contributes to the NAD(+) binding site. Positions 500 and 660 each coordinate substrate.

In the N-terminal section; belongs to the enoyl-CoA hydratase/isomerase family. This sequence in the C-terminal section; belongs to the 3-hydroxyacyl-CoA dehydrogenase family. In terms of assembly, heterotetramer of two alpha chains (FadB) and two beta chains (FadA).

The enzyme catalyses a (3S)-3-hydroxyacyl-CoA + NAD(+) = a 3-oxoacyl-CoA + NADH + H(+). It catalyses the reaction a (3S)-3-hydroxyacyl-CoA = a (2E)-enoyl-CoA + H2O. The catalysed reaction is a 4-saturated-(3S)-3-hydroxyacyl-CoA = a (3E)-enoyl-CoA + H2O. It carries out the reaction (3S)-3-hydroxybutanoyl-CoA = (3R)-3-hydroxybutanoyl-CoA. The enzyme catalyses a (3Z)-enoyl-CoA = a 4-saturated (2E)-enoyl-CoA. It catalyses the reaction a (3E)-enoyl-CoA = a 4-saturated (2E)-enoyl-CoA. It functions in the pathway lipid metabolism; fatty acid beta-oxidation. Its function is as follows. Involved in the aerobic and anaerobic degradation of long-chain fatty acids via beta-oxidation cycle. Catalyzes the formation of 3-oxoacyl-CoA from enoyl-CoA via L-3-hydroxyacyl-CoA. It can also use D-3-hydroxyacyl-CoA and cis-3-enoyl-CoA as substrate. This Klebsiella pneumoniae subsp. pneumoniae (strain ATCC 700721 / MGH 78578) protein is Fatty acid oxidation complex subunit alpha.